The primary structure comprises 260 residues: Small ribosomal subunit protein eS1 (260 aa).

Residues 1-18 (MAVGKNKRMSKGKKGGKK) show a composition bias toward basic residues. Residues 1-20 (MAVGKNKRMSKGKKGGKKKA) are disordered.

Belongs to the eukaryotic ribosomal protein eS1 family. As to quaternary structure, component of the small ribosomal subunit. Mature ribosomes consist of a small (40S) and a large (60S) subunit. The 40S subunit contains about 33 different proteins and 1 molecule of RNA (18S). The 60S subunit contains about 49 different proteins and 3 molecules of RNA (25S, 5.8S and 5S).

It localises to the cytoplasm. The polypeptide is Small ribosomal subunit protein eS1 (Ostreococcus lucimarinus (strain CCE9901)).